The chain runs to 156 residues: Transcriptional repressor NrdR (156 aa).

A zinc finger lies at 3–34 (CPKCSSTHSRVVDSRHADDANAIRRRRECENC). Residues 49 to 139 (LIVVKKDGTR…VYKEFKDVDQ (91 aa)) enclose the ATP-cone domain.

The protein belongs to the NrdR family. Requires Zn(2+) as cofactor.

In terms of biological role, negatively regulates transcription of bacterial ribonucleotide reductase nrd genes and operons by binding to NrdR-boxes. In Staphylococcus haemolyticus (strain JCSC1435), this protein is Transcriptional repressor NrdR.